The chain runs to 199 residues: Protein GrpE (199 aa).

A compositionally biased stretch (basic and acidic residues) spans 1–10; it reads MTNQTEKEQV. Residues 1–44 are disordered; sequence MTNQTEKEQVEQDVSQATELAQEAQEAQTQDVEPELQQNNEIDP. The span at 16 to 30 shows a compositional bias: low complexity; that stretch reads QATELAQEAQEAQTQ.

This sequence belongs to the GrpE family. Homodimer.

The protein localises to the cytoplasm. Participates actively in the response to hyperosmotic and heat shock by preventing the aggregation of stress-denatured proteins, in association with DnaK and GrpE. It is the nucleotide exchange factor for DnaK and may function as a thermosensor. Unfolded proteins bind initially to DnaJ; upon interaction with the DnaJ-bound protein, DnaK hydrolyzes its bound ATP, resulting in the formation of a stable complex. GrpE releases ADP from DnaK; ATP binding to DnaK triggers the release of the substrate protein, thus completing the reaction cycle. Several rounds of ATP-dependent interactions between DnaJ, DnaK and GrpE are required for fully efficient folding. This is Protein GrpE from Glaesserella parasuis serovar 5 (strain SH0165) (Haemophilus parasuis).